We begin with the raw amino-acid sequence, 1054 residues long: FERM, ARHGEF and pleckstrin domain-containing protein 2 (1054 aa).

One can recognise an FERM domain in the interval 44 to 324 (LHLRVKLLDN…EYHTFFRLLD (281 aa)). 2 positions are modified to phosphoserine: Ser389 and Ser439. The interval 421–527 (EFKDSSSSLT…GAGMDCEEPR (107 aa)) is disordered. Residues 468–492 (PGPGLSTKSPQPSPSSRKSPLSLSP) are compositionally biased toward low complexity. A DH domain is found at 535-726 (EAYFIVKEIL…TEVTTTLQHI (192 aa)). Residues 755–852 (EFIREGCLHK…WMLDLNSAIQ (98 aa)) enclose the PH 1 domain. The disordered stretch occupies residues 856–894 (SGGDTAPALPGRTVCTRPPRSPNEVSLEQESEDDARGVR). Residues 929-1026 (ENQLSGYLLR…WMEVIQGASS (98 aa)) enclose the PH 2 domain. The interval 1029–1054 (GRAPSIVQDGPQPSSGLEGMVRGKEE) is disordered.

In terms of assembly, interacts with PLXNA1. Interaction with PLXNA1 or PIP5K1C lowers its guanine nucleotide exchange activity. Dissociates from PLXNA1 when SEMA3A binds to the receptor. Interacts with PIP5K1C via its FERM domain. The interaction with PIP5K1C is enhanced by SEMA3A binding. Interacts with RAC1.

Functions as a guanine nucleotide exchange factor that activates RAC1. May have relatively low activity. Plays a role in the response to class 3 semaphorins and remodeling of the actin cytoskeleton. Plays a role in TNFSF11-mediated osteoclast differentiation, especially in podosome rearrangement and reorganization of the actin cytoskeleton. Regulates the activation of ITGB3, integrin signaling and cell adhesion. The sequence is that of FERM, ARHGEF and pleckstrin domain-containing protein 2 (FARP2) from Homo sapiens (Human).